The chain runs to 287 residues: Bifunctional protein FolD (287 aa).

NADP(+) is bound by residues 166 to 168 (GAS) and I232.

It belongs to the tetrahydrofolate dehydrogenase/cyclohydrolase family. Homodimer.

It catalyses the reaction (6R)-5,10-methylene-5,6,7,8-tetrahydrofolate + NADP(+) = (6R)-5,10-methenyltetrahydrofolate + NADPH. The enzyme catalyses (6R)-5,10-methenyltetrahydrofolate + H2O = (6R)-10-formyltetrahydrofolate + H(+). Its pathway is one-carbon metabolism; tetrahydrofolate interconversion. Its function is as follows. Catalyzes the oxidation of 5,10-methylenetetrahydrofolate to 5,10-methenyltetrahydrofolate and then the hydrolysis of 5,10-methenyltetrahydrofolate to 10-formyltetrahydrofolate. This chain is Bifunctional protein FolD, found in Pectobacterium atrosepticum (strain SCRI 1043 / ATCC BAA-672) (Erwinia carotovora subsp. atroseptica).